A 647-amino-acid chain; its full sequence is Nucleoside triphosphatase I (647 aa).

The region spanning 48–212 (FIGLKNLNSM…NNLIGLLRPN (165 aa)) is the Helicase ATP-binding domain. Residue 61-68 (WDTGTGKT) participates in ATP binding. A DEXH box motif is present at residues 150–153 (DEVH). The Helicase C-terminal domain occupies 378–541 (YIEACRIILN…KINVVFDLLK (164 aa)). Positions 467-533 (DIIILDMPWN…DIIKNKQGKI (67 aa)) are binding to the cap-specific mRNA (nucleoside-2'-O-)-methyltransferase.

Belongs to the helicase family. NPH I subfamily. Monomer. Interacts (via C-terminus) with RAP94 (via N-terminus). Interacts with the cap-specific mRNA (nucleoside-2'-O-)-methyltransferase.

Its subcellular location is the virion. The enzyme catalyses a ribonucleoside 5'-triphosphate + H2O = a ribonucleoside 5'-diphosphate + phosphate + H(+). In terms of biological role, DNA-dependent ATPase required for providing the needed energy to achieve the termination of early transcripts. Acts in concert with the RAP94 subunit of the virion RNA polymerase and the capping enzyme/VTF to catalyze release of UUUUUNU-containing nascent RNA from the elongation complex. NPH-I must bind ssDNA in order to exhibit ATPase activity. This chain is Nucleoside triphosphatase I (NPH1), found in Choristoneura fumiferana (Spruce budworm moth).